The sequence spans 313 residues: DNA-directed RNA polymerase subunit alpha (313 aa).

The interval 1–229 (MNSSNLLMEC…NLFKSIGEQK (229 aa)) is alpha N-terminal domain (alpha-NTD). The tract at residues 243-313 (IKPIDPYTHI…LKNKLGIVLK (71 aa)) is alpha C-terminal domain (alpha-CTD).

This sequence belongs to the RNA polymerase alpha chain family. As to quaternary structure, in plastids the minimal PEP RNA polymerase catalytic core is composed of four subunits: alpha, beta, beta', and beta''. When a (nuclear-encoded) sigma factor is associated with the core the holoenzyme is formed, which can initiate transcription.

It localises to the plastid. It is found in the chloroplast. It catalyses the reaction RNA(n) + a ribonucleoside 5'-triphosphate = RNA(n+1) + diphosphate. Its function is as follows. DNA-dependent RNA polymerase catalyzes the transcription of DNA into RNA using the four ribonucleoside triphosphates as substrates. This Thalassiosira pseudonana (Marine diatom) protein is DNA-directed RNA polymerase subunit alpha.